The following is a 283-amino-acid chain: tRNA pseudouridine synthase B (283 aa).

The Nucleophile role is filled by Asp38.

The protein belongs to the pseudouridine synthase TruB family. Type 1 subfamily.

The enzyme catalyses uridine(55) in tRNA = pseudouridine(55) in tRNA. Its function is as follows. Responsible for synthesis of pseudouridine from uracil-55 in the psi GC loop of transfer RNAs. In Onion yellows phytoplasma (strain OY-M), this protein is tRNA pseudouridine synthase B.